A 437-amino-acid chain; its full sequence is Probable N-acetylmuramidase (437 aa).

A signal peptide spans 1-57 (MPVSRVKVKNRHLKKKTKKPLAFYKPATKFAGAVLIAGTLTTTHELLLQQTSPMVQA). Disordered regions lie at residues 217–244 (SSAG…SSTT), 290–320 (ASST…SQTT), and 367–392 (AASN…NSNA). One can recognise a LysM 1 domain in the interval 243–286 (TTYTVKSGDTLWGISQRYGISVAQIQSANNLKSTIIYIGQKLVL). Residues 290–317 (ASSTNSGGSNNSASTTPTTSVTPAKPTS) show a composition bias toward low complexity. In terms of domain architecture, LysM 2 spans 319–362 (TTVKVKSGDTLWALSVKYKTSIAQLKSWNHLSSDTIYIGQNLIV). The 44-residue stretch at 393–436 (SIHKVVKGDTLWGLSQKSGSPIASIKAWNHLSSDTILIGQYLRI) folds into the LysM 3 domain.

The protein belongs to the glycosyl hydrolase 73 family.

Its subcellular location is the secreted. It catalyses the reaction Hydrolysis of (1-&gt;4)-beta-linkages between N-acetylmuramic acid and N-acetyl-D-glucosamine residues in a peptidoglycan and between N-acetyl-D-glucosamine residues in chitodextrins.. Hydrolyzes the cell wall of L.lactis and M.lysodeikticus. Required for cell separation during growth. In Lactococcus lactis subsp. cremoris (strain MG1363), this protein is Probable N-acetylmuramidase (acmA).